The primary structure comprises 106 residues: UPF0145 protein Fphi_1781 (106 aa).

Belongs to the UPF0145 family.

In Francisella philomiragia subsp. philomiragia (strain ATCC 25017 / CCUG 19701 / FSC 153 / O#319-036), this protein is UPF0145 protein Fphi_1781.